The sequence spans 604 residues: Siderophore iron transporter mirB (604 aa).

The tract at residues 1-61 (MTIGSKFSLL…DNSSDEALPS (61 aa)) is disordered. The next 14 membrane-spanning stretches (helical) occupy residues 73–95 (AVTL…LVTL), 115–137 (FQSH…ALYI), 149–168 (AEGW…MMAA), 178–200 (ADVF…AADI), 207–224 (GIAF…AFAG), 237–259 (WRWG…YFVL), 289–311 (YFFA…FLLP), 326–343 (YIIA…LFVL), 363–385 (TVLG…NSYF), 400–422 (AGYV…GFAI), 427–449 (YFRW…MIHF), 454–476 (QYIG…FVLL), 489–511 (YVAA…GNAI), and 566–588 (AQAR…MFMV).

This sequence belongs to the major facilitator superfamily.

Its subcellular location is the membrane. Involved in the transport of siderophore triacestylfusarinine C and so has a role in iron homeostasis. The protein is Siderophore iron transporter mirB (mirB) of Emericella nidulans (strain FGSC A4 / ATCC 38163 / CBS 112.46 / NRRL 194 / M139) (Aspergillus nidulans).